Consider the following 32-residue polypeptide: MEALVYTFLLIGTLVVIFFAIFFRDPPRIVKK.

The chain crosses the membrane as a helical span at residues 3–23 (ALVYTFLLIGTLVVIFFAIFF).

This sequence belongs to the PsbT family. In terms of assembly, PSII is composed of 1 copy each of membrane proteins PsbA, PsbB, PsbC, PsbD, PsbE, PsbF, PsbH, PsbI, PsbJ, PsbK, PsbL, PsbM, PsbT, PsbX, PsbY, PsbZ, Psb30/Ycf12, at least 3 peripheral proteins of the oxygen-evolving complex and a large number of cofactors. It forms dimeric complexes.

The protein resides in the plastid. It localises to the chloroplast thylakoid membrane. Its function is as follows. Found at the monomer-monomer interface of the photosystem II (PS II) dimer, plays a role in assembly and dimerization of PSII. PSII is a light-driven water plastoquinone oxidoreductase, using light energy to abstract electrons from H(2)O, generating a proton gradient subsequently used for ATP formation. The polypeptide is Photosystem II reaction center protein T (Emiliania huxleyi (Coccolithophore)).